The following is a 269-amino-acid chain: Chromosome-partitioning protein Spo0J (269 aa).

Residues 1–20 (MSRKPSGLGRGLEALLPKTG) form a stimulates ATPase activity of Soj by 8% region. A DNA-binding region (H-T-H motif) is located at residues 137–156 (QEEVARRVGKARSTVANALR). The tract at residues 223 to 269 (PSPLSLELSRHLGLPVRVVGGKKGKVVIQYRSLEELEALLRRLGYQA) is required for DNA-binding; may be responsible for dimerization.

It belongs to the ParB family. Homodimer, probably via the C-terminal 46 residues. Dimerization of the N-terminal H-T-H region may require DNA-binding. Probably interacts with ATPase Soj.

Its function is as follows. Probably involved in chromosome partitioning. Binds to a plasmid centromere-like site parS. Stimulates the ATPase activity 10-fold of Soj; the first 20 residues may be responsible. This Thermus thermophilus (strain ATCC BAA-163 / DSM 7039 / HB27) protein is Chromosome-partitioning protein Spo0J (spo0C).